A 189-amino-acid chain; its full sequence is Elongation factor P (189 aa).

K34 bears the N6-(3,6-diaminohexanoyl)-5-hydroxylysine mark.

It belongs to the elongation factor P family. In terms of processing, may be beta-lysylated on the epsilon-amino group of Lys-34 by the combined action of EpmA and EpmB, and then hydroxylated on the C5 position of the same residue by EpmC (if this protein is present). Lysylation is critical for the stimulatory effect of EF-P on peptide-bond formation. The lysylation moiety may extend toward the peptidyltransferase center and stabilize the terminal 3-CCA end of the tRNA. Hydroxylation of the C5 position on Lys-34 may allow additional potential stabilizing hydrogen-bond interactions with the P-tRNA.

It is found in the cytoplasm. Its pathway is protein biosynthesis; polypeptide chain elongation. In terms of biological role, involved in peptide bond synthesis. Alleviates ribosome stalling that occurs when 3 or more consecutive Pro residues or the sequence PPG is present in a protein, possibly by augmenting the peptidyl transferase activity of the ribosome. Modification of Lys-34 is required for alleviation. This is Elongation factor P from Alcanivorax borkumensis (strain ATCC 700651 / DSM 11573 / NCIMB 13689 / SK2).